A 234-amino-acid chain; its full sequence is Homeobox protein ceh-51 (234 aa).

Disordered stretches follow at residues 128-154 (PPSF…RTPF) and 209-234 (QIKQ…HVIS). The segment at residues 147 to 206 (RRGARTPFSDSQLYALRTRFEQCDTIKVDERRKLGAVIGLSPEQIKIWFQNRRFKLRKEK) is a DNA-binding region (homeobox). The segment covering 220–234 (SAKEEAEEDQKHVIS) has biased composition (basic and acidic residues).

The protein belongs to the NK-2 homeobox family.

It is found in the nucleus. Required for mesoderm development, including specification of muscle and coelomocyte precursors. The polypeptide is Homeobox protein ceh-51 (Caenorhabditis elegans).